Here is a 61-residue protein sequence, read N- to C-terminus: Large ribosomal subunit protein uL30 (61 aa).

Belongs to the universal ribosomal protein uL30 family. Part of the 50S ribosomal subunit.

In Marinomonas sp. (strain MWYL1), this protein is Large ribosomal subunit protein uL30.